A 35-amino-acid polypeptide reads, in one-letter code: U1-theraphotoxin-Hs1f (35 aa).

3 disulfides stabilise this stretch: Cys-3/Cys-16, Cys-7/Cys-27, and Cys-21/Cys-32.

It belongs to the neurotoxin 12 (Hwtx-2) family. 02 (Hwtx-2) subfamily. As to expression, expressed by the venom gland.

The protein resides in the secreted. In terms of biological role, blocks neuromuscular transmission. Acts cooperatively to potentiate the activity of huwentoxin-I. Paralyzes locusts and kills mice following intracerebroventricular injection. In Cyriopagopus schmidti (Chinese bird spider), this protein is U1-theraphotoxin-Hs1f.